Reading from the N-terminus, the 131-residue chain is Protein Bouncer (131 aa).

A signal peptide spans 1–26; that stretch reads MGSLRTRQLFHAALLWLCLPLPLLLC. 4 disulfides stabilise this stretch: C31/C56, C50/C74, C80/C99, and C100/C105. One can recognise a UPAR/Ly6 domain in the interval 31 to 106; the sequence is CYYSPVLEKE…YSCCDWPYCN (76 aa). The N-linked (GlcNAc...) asparagine glycan is linked to N65. N106 carries GPI-anchor amidated asparagine lipidation. The propeptide at 107-131 is removed in mature form; the sequence is RAVALEPLTAMLVAAAVVACSFCLT.

This sequence belongs to the SPACA4/bouncer family. Interacts with spermatocyte complex composed of izumo1, spaca6 and tmem81. As to expression, expressed in oocytes. Not expressed in testis.

The protein resides in the cell membrane. Its function is as follows. Oocyte-expressed fertilization factor that mediates sperm-egg binding and is essential for sperm entry into the egg. Necessary and sufficient to mediate species-specific gamete recognition and fertilization, which is essential for vertebrate species performing external fertilization. External fertilization cannot guarantee that only conspecific sperm reaches the egg by precopulatory mate choice: proteins such as Bouncer can therefore support the selection of conspecific sperm. The polypeptide is Protein Bouncer (Oryzias latipes (Japanese rice fish)).